The following is a 402-amino-acid chain: Zinc finger protein 587B (402 aa).

Positions 15–91 (VTFEDVAVKF…PVTGVSPKKA (77 aa)) constitute a KRAB domain. A C2H2-type 1 zinc finger spans residues 92–114 (HPCEMCGPILGDILHVADHQGTH). A C2H2-type 2; degenerate zinc finger spans residues 120 to 142 (HRCEAWGNKLYDSGNFHQHQNEH). Residues Lys-177, Lys-200, and Lys-253 each participate in a glycyl lysine isopeptide (Lys-Gly) (interchain with G-Cter in SUMO2) cross-link. 5 C2H2-type zinc fingers span residues 242 to 264 (YVCCECGKSFSKYVSFSNHQRVH), 270 to 292 (YECGECEKSFSQKSSLIQHQQFH), 298 to 320 (YGCEECGKYFSLEGYLRRHQKVH), 326 to 348 (YECGECGKSFSSNVNLKSHQRIH), and 354 to 383 (YKCGECEKSFSRKPSLSYHQRFGRPRWVDH). A Glycyl lysine isopeptide (Lys-Gly) (interchain with G-Cter in SUMO2) cross-link involves residue Lys-366.

It belongs to the krueppel C2H2-type zinc-finger protein family.

The protein resides in the nucleus. Functionally, may be involved in transcriptional regulation. In Homo sapiens (Human), this protein is Zinc finger protein 587B (ZNF587B).